A 293-amino-acid chain; its full sequence is Small ribosomal subunit biogenesis GTPase RsgA (293 aa).

The CP-type G domain maps to 63 to 223 (KNQLNRPPIA…VADTPGFSSL (161 aa)). GTP is bound by residues 112 to 115 (SKTD) and 166 to 174 (GQSGVGKSS). Positions 247, 252, 254, and 260 each coordinate Zn(2+).

Belongs to the TRAFAC class YlqF/YawG GTPase family. RsgA subfamily. In terms of assembly, monomer. Associates with 30S ribosomal subunit, binds 16S rRNA. Zn(2+) is required as a cofactor.

Its subcellular location is the cytoplasm. One of several proteins that assist in the late maturation steps of the functional core of the 30S ribosomal subunit. Helps release RbfA from mature subunits. May play a role in the assembly of ribosomal proteins into the subunit. Circularly permuted GTPase that catalyzes slow GTP hydrolysis, GTPase activity is stimulated by the 30S ribosomal subunit. This chain is Small ribosomal subunit biogenesis GTPase RsgA, found in Shouchella clausii (strain KSM-K16) (Alkalihalobacillus clausii).